A 156-amino-acid chain; its full sequence is B3 domain-containing protein At5g26805 (156 aa).

Residues 57–155 (KFQLPMEKIR…MFCFSVLDGR (99 aa)) constitute a DNA-binding region (TF-B3).

It localises to the nucleus. This is B3 domain-containing protein At5g26805 from Arabidopsis thaliana (Mouse-ear cress).